Consider the following 265-residue polypeptide: MLTLEASQLDGPHPSYMFSDSSFYDLDSCKPLPTFPHCLMEAEPPTDPCAGWLELAEPGYEPFDSGQLAPLHTVTVPYGHGPYPPAPSDAIYSLEGPLPAPSHCPVLPEEYGAQPYTLYSPCPLPSTPLSEDDDFPTDAPALEVSDSDSDENLSPGGSLDLDSGSRRKLRLYQFLLGLLQRGDMQECVWWVEHDSGVFQFSSKHKEALAHRWGQQKGNRKAMTYQKMARALRNYGKTGEIRKVKKKLTYQFGHKLLGLSGPRAPS.

The TAD1 (Acidic) stretch occupies residues 1–31; sequence MLTLEASQLDGPHPSYMFSDSSFYDLDSCKP. The segment at 42 to 63 is TAD2; that stretch reads AEPPTDPCAGWLELAEPGYEPF. Residues 127–160 form a disordered region; it reads TPLSEDDDFPTDAPALEVSDSDSDENLSPGGSLD. The ETS DNA-binding region spans 169 to 252; that stretch reads LRLYQFLLGL…VKKKLTYQFG (84 aa).

This sequence belongs to the ETS family.

It localises to the nucleus. May act as a sequence specific transcriptional activator. In Paleosuchus palpebrosus (Cuvier's smooth-fronted caiman), this protein is Transcription factor Spi-B-like.